A 365-amino-acid chain; its full sequence is 3-isopropylmalate dehydrogenase (365 aa).

Residue 78–91 (GKKWNNLPIEKRPE) participates in NAD(+) binding. Residues Arg-99, Arg-109, Arg-139, and Asp-228 each contribute to the substrate site. Residues Asp-228, Asp-252, and Asp-256 each contribute to the Mg(2+) site. 286–298 (GSAPDIAGKNIAN) is an NAD(+) binding site.

Belongs to the isocitrate and isopropylmalate dehydrogenases family. LeuB type 1 subfamily. In terms of assembly, homodimer. Mg(2+) serves as cofactor. The cofactor is Mn(2+).

Its subcellular location is the cytoplasm. The enzyme catalyses (2R,3S)-3-isopropylmalate + NAD(+) = 4-methyl-2-oxopentanoate + CO2 + NADH. It functions in the pathway amino-acid biosynthesis; L-leucine biosynthesis; L-leucine from 3-methyl-2-oxobutanoate: step 3/4. Its function is as follows. Catalyzes the oxidation of 3-carboxy-2-hydroxy-4-methylpentanoate (3-isopropylmalate) to 3-carboxy-4-methyl-2-oxopentanoate. The product decarboxylates to 4-methyl-2 oxopentanoate. The sequence is that of 3-isopropylmalate dehydrogenase from Buchnera aphidicola subsp. Macrosiphoniella ludovicianae.